The following is a 484-amino-acid chain: Aldehyde dehydrogenase family 3 member F1 (484 aa).

An NAD(+)-binding site is contributed by Gly-192–Gly-197. Catalysis depends on Glu-214, which acts as the Proton acceptor. The Nucleophile role is filled by Cys-252.

The protein belongs to the aldehyde dehydrogenase family. Homotetramer. As to expression, constituively expressed at low levels.

It carries out the reaction an aldehyde + NAD(+) + H2O = a carboxylate + NADH + 2 H(+). This Arabidopsis thaliana (Mouse-ear cress) protein is Aldehyde dehydrogenase family 3 member F1 (ALDH3F1).